We begin with the raw amino-acid sequence, 510 residues long: Holliday junction branch migration ATPase PINA (510 aa).

Homohexamer. Interacts with Holliday junction resolvase Hjc, interacts with helicase Hjm (Hel308).

It catalyses the reaction ATP + H2O = ADP + phosphate + H(+). Functionally, important for growth at low temperatures (less than 65 degrees Celsius in this organism). Promotes Holliday junction (HJ) branch migration and unwinds Y-shaped DNA (but not replication forks or dsDNA) in an ATP hydrolysis-dependent manner. Stimulates cleavage by HJ resolvase Hjc. Hjc, Hjm (Hel308) and PINA coordinate HJ migration and cleavage of replication forks in a coordinated way. Probably acts as an ATP-dependent pump that pulls DNA through the hexamer. This chain is Holliday junction branch migration ATPase PINA, found in Sulfolobus acidocaldarius (strain ATCC 33909 / DSM 639 / JCM 8929 / NBRC 15157 / NCIMB 11770).